Here is a 40-residue protein sequence, read N- to C-terminus: Photosystem II reaction center protein J (40 aa).

A helical transmembrane segment spans residues 8–28 (IPLWLVATVAGLAAIGVLGIF).

It belongs to the PsbJ family. PSII is composed of 1 copy each of membrane proteins PsbA, PsbB, PsbC, PsbD, PsbE, PsbF, PsbH, PsbI, PsbJ, PsbK, PsbL, PsbM, PsbT, PsbX, PsbY, PsbZ, Psb30/Ycf12, at least 3 peripheral proteins of the oxygen-evolving complex and a large number of cofactors. It forms dimeric complexes.

It localises to the plastid. The protein resides in the cyanelle thylakoid membrane. One of the components of the core complex of photosystem II (PSII). PSII is a light-driven water:plastoquinone oxidoreductase that uses light energy to abstract electrons from H(2)O, generating O(2) and a proton gradient subsequently used for ATP formation. It consists of a core antenna complex that captures photons, and an electron transfer chain that converts photonic excitation into a charge separation. The chain is Photosystem II reaction center protein J from Cyanophora paradoxa.